The primary structure comprises 134 residues: Small ribosomal subunit protein uS8c (134 aa).

It belongs to the universal ribosomal protein uS8 family. In terms of assembly, part of the 30S ribosomal subunit.

It is found in the plastid. In terms of biological role, one of the primary rRNA binding proteins, it binds directly to 16S rRNA central domain where it helps coordinate assembly of the platform of the 30S subunit. The sequence is that of Small ribosomal subunit protein uS8c (rps8) from Cuscuta obtusiflora (Peruvian dodder).